Here is an 84-residue protein sequence, read N- to C-terminus: Kidney-associated antigen 1 (84 aa).

Residues 31 to 84 (PGAAAAHLPRWPPPQLAASRREAPPLSQRPHRTQGAGSPPETNEKLTNPQVKEK) form a disordered region. Over residues 75–84 (KLTNPQVKEK) the composition is skewed to polar residues.

Expressed in testis and kidney, and, at lower levels, in urinary bladder and liver. Expressed by a high proportion of tumors of various histologic origin, including melanomas, sarcomas and colorectal carcinomas.

The polypeptide is Kidney-associated antigen 1 (KAAG1) (Homo sapiens (Human)).